Consider the following 189-residue polypeptide: Putative ankyrin repeat protein TV1425 (189 aa).

ANK repeat units follow at residues 31–60 (YNRT…KLED), 64–93 (EGST…NVNT), 97–126 (SGKT…NVND), and 130–159 (EGET…DISA).

This chain is Putative ankyrin repeat protein TV1425, found in Thermoplasma volcanium (strain ATCC 51530 / DSM 4299 / JCM 9571 / NBRC 15438 / GSS1).